Here is a 963-residue protein sequence, read N- to C-terminus: Importin-13 (963 aa).

HEAT repeat units follow at residues 24-54 (ENVE…QAQV), 56-88 (PQAW…KISR), 95-135 (TDQY…LSMM), 142-179 (AVAD…EFQT), 194-231 (LAVE…SWVQ), 236-268 (LQDC…NAIS), 276-325 (VNTL…ALLD), 330-372 (WQSF…DDIL), 375-438 (EAEK…YEML), 440-476 (AELL…FQSI), 487-522 (VVPG…WLAD), 524-558 (PVMI…CREC), 562-600 (LPPY…LLSA), 603-648 (VEEN…SNLF), 676-716 (PVVV…VKTL), 720-754 (FAPM…VHIF), 761-803 (FPPI…ALKR), 815-845 (VKAV…TELL), 860-893 (EDGR…FALN), and 897-931 (FSLL…QQIL). The Importin N-terminal domain occupies 45–111 (AQKWLMQAQV…KAHSFTQITR (67 aa)).

It belongs to the importin beta family. Interacts with UBC9, RAN, RBM8A, eIF-1A and PAX6. In terms of tissue distribution, expressed in fetal brain, heart, intestine and kidney.

It is found in the cytoplasm. It localises to the nucleus. In terms of biological role, functions in nuclear protein import as nuclear transport receptor. Serves as receptor for nuclear localization signals (NLS) in cargo substrates. Is thought to mediate docking of the importin/substrate complex to the nuclear pore complex (NPC) through binding to nucleoporin and the complex is subsequently translocated through the pore by an energy requiring, Ran-dependent mechanism. At the nucleoplasmic side of the NPC, Ran binds to the importin, the importin/substrate complex dissociates and importin is re-exported from the nucleus to the cytoplasm where GTP hydrolysis releases Ran. The directionality of nuclear import is thought to be conferred by an asymmetric distribution of the GTP- and GDP-bound forms of Ran between the cytoplasm and nucleus. Mediates the nuclear import of UBC9, the RBM8A/MAGOH complex, PAX6 and probably other members of the paired homeobox family. Also mediates nuclear export of eIF-1A, and the cytoplasmic release of eIF-1A is triggered by the loading of import substrates onto IPO13. The sequence is that of Importin-13 (Ipo13) from Rattus norvegicus (Rat).